Reading from the N-terminus, the 334-residue chain is S-adenosylmethionine decarboxylase proenzyme (334 aa).

Position 7 (F7) interacts with substrate. Active-site residues include E8 and E11. Substrate is bound at residue E67. S68 functions as the Schiff-base intermediate with substrate; via pyruvic acid in the catalytic mechanism. A Pyruvic acid (Ser); by autocatalysis modification is found at S68. Residue C82 is the Proton donor; for catalytic activity of the active site. Substrate is bound at residue F223. Active-site proton acceptor; for processing activity residues include S229 and H243. E247 is a substrate binding site. S298 is modified (phosphoserine).

This sequence belongs to the eukaryotic AdoMetDC family. As to quaternary structure, heterotetramer of two alpha and two beta chains. It depends on pyruvate as a cofactor. In terms of processing, is synthesized initially as an inactive proenzyme. Formation of the active enzyme involves a self-maturation process in which the active site pyruvoyl group is generated from an internal serine residue via an autocatalytic post-translational modification. Two non-identical subunits are generated from the proenzyme in this reaction, and the pyruvate is formed at the N-terminus of the alpha chain, which is derived from the carboxyl end of the proenzyme. The post-translation cleavage follows an unusual pathway, termed non-hydrolytic serinolysis, in which the side chain hydroxyl group of the serine supplies its oxygen atom to form the C-terminus of the beta chain, while the remainder of the serine residue undergoes an oxidative deamination to produce ammonia and the pyruvoyl group blocking the N-terminus of the alpha chain.

The enzyme catalyses S-adenosyl-L-methionine + H(+) = S-adenosyl 3-(methylsulfanyl)propylamine + CO2. Its pathway is amine and polyamine biosynthesis; S-adenosylmethioninamine biosynthesis; S-adenosylmethioninamine from S-adenosyl-L-methionine: step 1/1. Its function is as follows. Essential for biosynthesis of the polyamines spermidine and spermine. Promotes maintenance and self-renewal of embryonic stem cells, by maintaining spermine levels. The chain is S-adenosylmethionine decarboxylase proenzyme (AMD1) from Bos taurus (Bovine).